The chain runs to 199 residues: MSLFGLSLGRLLEALRCLPGVGPKSAQRMAFHLLESDREGGRHLAQALLEALDKMTHCQTCRILSETDLCSLCADSRRDRGQLCVVEMPSDVQAIEQATSYSGRYFVLMGHLSPLDGVGPEALGMDLLAKRLDTDQIREVILATNLTVEGEATAYYISELAQTRGITTTRIAHGVPLGGELEFIDSNTLSHAFQSRRHL.

The C4-type zinc finger occupies 58–73 (CQTCRILSETDLCSLC). The Toprim domain maps to 81 to 176 (GQLCVVEMPS…TTTRIAHGVP (96 aa)).

Belongs to the RecR family.

In terms of biological role, may play a role in DNA repair. It seems to be involved in an RecBC-independent recombinational process of DNA repair. It may act with RecF and RecO. The sequence is that of Recombination protein RecR from Nitrosococcus oceani (strain ATCC 19707 / BCRC 17464 / JCM 30415 / NCIMB 11848 / C-107).